Here is a 458-residue protein sequence, read N- to C-terminus: Argininosuccinate lyase (458 aa).

Belongs to the lyase 1 family. Argininosuccinate lyase subfamily.

The protein localises to the cytoplasm. The enzyme catalyses 2-(N(omega)-L-arginino)succinate = fumarate + L-arginine. It functions in the pathway amino-acid biosynthesis; L-arginine biosynthesis; L-arginine from L-ornithine and carbamoyl phosphate: step 3/3. In Salmonella agona (strain SL483), this protein is Argininosuccinate lyase.